The chain runs to 278 residues: MNVLEAVFLGAVEGLTEFLPVSSTGHLTILEKLLGHDIDDPDITAFTAIIQVGAVFATLLYFRHDFRRLLAAWGRGVRDPAWREHPDYRFGWAVILGSIPIGLVGVAFKDQIETTLRSLWFVGGALILWSGVMGYADHVGTQKRHEEDVTWKDTLVIGIVQCMALIPGISRSGATMSAGLLRGLDRVAVTRLSFFLSIPALMAAAALQVLTKSDDIADGVGWPATIIATVVSFAVAYVAIAWLLKFIARHSYSVFIGYRLALGATVLFLVATGIVSAT.

Transmembrane regions (helical) follow at residues 42-62 (DITA…LLYF), 88-108 (YRFG…GVAF), 119-139 (LWFV…ADHV), 187-207 (VAVT…AAAL), 224-244 (ATII…AWLL), and 254-274 (VFIG…ATGI).

It belongs to the UppP family.

The protein resides in the cell membrane. It carries out the reaction di-trans,octa-cis-undecaprenyl diphosphate + H2O = di-trans,octa-cis-undecaprenyl phosphate + phosphate + H(+). Its function is as follows. Catalyzes the dephosphorylation of undecaprenyl diphosphate (UPP). Confers resistance to bacitracin. This chain is Undecaprenyl-diphosphatase 3, found in Frankia casuarinae (strain DSM 45818 / CECT 9043 / HFP020203 / CcI3).